Consider the following 342-residue polypeptide: MLDLYRRTVARFPLGSVSYMFAYGSGVKQQEGYGKVGNGNNLRPPPGTVVDLVFCVRDARGFHAENLHRHPDHYSALRHLGPNFVAKYQERLGAGVYCNTLVPLPDVGITIKYGVVSQEELLEDLLDWRHLYLAGRLHKPVTNLVNPSDNPPLKAALERNLVSALQVALLLLPEKFTAYGLFHTIAGLSYKGDFRMIFGENKQKVHNIVSPQINDFFALYQPSLGQLSDYVAVNMKGQEPGSRKPAIIFEQDKSSSATCQHLRQLPRELQKRLQRNAACRGDYTQVVNHLSMASQLPEVLQASVNDIVWRSSVTQSIKNIPSAGILKSLAYSYRKAQKTFAV.

The protein belongs to the TAM41 family. Requires Mg(2+) as cofactor. The cofactor is Co(2+). It depends on Cu(2+) as a cofactor.

The protein localises to the mitochondrion inner membrane. It carries out the reaction a 1,2-diacyl-sn-glycero-3-phosphate + CTP + H(+) = a CDP-1,2-diacyl-sn-glycerol + diphosphate. Its pathway is phospholipid metabolism; CDP-diacylglycerol biosynthesis; CDP-diacylglycerol from sn-glycerol 3-phosphate: step 3/3. In terms of biological role, catalyzes the formation of CDP-diacylglycerol (CDP-DAG) from phosphatidic acid (PA) in the mitochondrial inner membrane. Required for the biosynthesis of the dimeric phospholipid cardiolipin, which stabilizes supercomplexes of the mitochondrial respiratory chain in the mitochondrial inner membrane. This chain is Phosphatidate cytidylyltransferase, mitochondrial, found in Drosophila melanogaster (Fruit fly).